The primary structure comprises 64 residues: Large ribosomal subunit protein bL32 (64 aa).

The tract at residues 1–35 (MAVQKSRVTPSRRGQRRSHDALTAKQLSTDPTSGE) is disordered.

The protein belongs to the bacterial ribosomal protein bL32 family.

The sequence is that of Large ribosomal subunit protein bL32 from Xanthomonas axonopodis pv. citri (strain 306).